Consider the following 98-residue polypeptide: Aspartyl/glutamyl-tRNA(Asn/Gln) amidotransferase subunit C (98 aa).

Residues 75–98 (AQALSGAPAQEQQRFKVPQILGED) form a disordered region.

Belongs to the GatC family. As to quaternary structure, heterotrimer of A, B and C subunits.

It carries out the reaction L-glutamyl-tRNA(Gln) + L-glutamine + ATP + H2O = L-glutaminyl-tRNA(Gln) + L-glutamate + ADP + phosphate + H(+). The enzyme catalyses L-aspartyl-tRNA(Asn) + L-glutamine + ATP + H2O = L-asparaginyl-tRNA(Asn) + L-glutamate + ADP + phosphate + 2 H(+). Its function is as follows. Allows the formation of correctly charged Asn-tRNA(Asn) or Gln-tRNA(Gln) through the transamidation of misacylated Asp-tRNA(Asn) or Glu-tRNA(Gln) in organisms which lack either or both of asparaginyl-tRNA or glutaminyl-tRNA synthetases. The reaction takes place in the presence of glutamine and ATP through an activated phospho-Asp-tRNA(Asn) or phospho-Glu-tRNA(Gln). In Streptomyces griseus subsp. griseus (strain JCM 4626 / CBS 651.72 / NBRC 13350 / KCC S-0626 / ISP 5235), this protein is Aspartyl/glutamyl-tRNA(Asn/Gln) amidotransferase subunit C.